The primary structure comprises 341 residues: Peroxisomal membrane protein PEX14 (341 aa).

Ser-2 is modified (N-acetylserine). Positions 86–94 (PPTLPHRDW) match the SH3-binding motif. The segment at 276 to 341 (MQEESDKEKE…QNGQVEDSIP (66 aa)) is disordered. Residues 279–295 (ESDKEKENGSDANKDDN) are compositionally biased toward basic and acidic residues. Residues 308–341 (IDSNASIPEWQKNTAANEISVPDWQNGQVEDSIP) show a composition bias toward polar residues. Ser-313 is subject to Phosphoserine.

It belongs to the peroxin-14 family. As to quaternary structure, interacts with PEX13 (via SH3 domain); forming the PEX13-PEX14 docking complex. Interacts with PEX5 (via WxxxF/Y motifs). Interacts with PEX7. Interacts with PEX9.

The protein localises to the peroxisome membrane. Functionally, component of the PEX13-PEX14 docking complex, a translocon channel that specifically mediates the import of peroxisomal cargo proteins bound to PEX5 or PEX21 receptors. The PEX13-PEX14 docking complex forms a large import pore which can be opened to a diameter of about 9 nm. Mechanistically, PEX5 (or PEX21) receptor along with cargo proteins associates with the PEX14 subunit of the PEX13-PEX14 docking complex in the cytosol, leading to the insertion of the receptor into the organelle membrane with the concomitant translocation of the cargo into the peroxisome matrix. This Saccharomyces cerevisiae (strain ATCC 204508 / S288c) (Baker's yeast) protein is Peroxisomal membrane protein PEX14.